The chain runs to 1047 residues: Atrial natriuretic peptide receptor 2 (1047 aa).

A signal peptide spans 1 to 22 (MALPSLLLLVAALAGGVRPPGA). Topologically, residues 23 to 458 (RNLTLAVVLP…DKTPLSTLAI (436 aa)) are extracellular. N-linked (GlcNAc...) asparagine glycans are attached at residues asparagine 24 and asparagine 35. The cysteines at positions 75 and 101 are disulfide-linked. Asparagine 161, asparagine 195, asparagine 244, asparagine 277, and asparagine 349 each carry an N-linked (GlcNAc...) asparagine glycan. A helical membrane pass occupies residues 459 to 478 (VALGTGITFIMFGVSSFLIF). Residues 479–1047 (RKLMLEKELA…GERKGPPGLL (569 aa)) lie on the Cytoplasmic side of the membrane. A Phosphoserine modification is found at serine 513. One can recognise a Protein kinase domain in the interval 513–786 (SRLTLSLRGS…PDFGQIKGFI (274 aa)). Position 516 is a phosphothreonine (threonine 516). 4 positions are modified to phosphoserine: serine 518, serine 522, serine 523, and serine 526. At threonine 529 the chain carries Phosphothreonine. Residues 861 to 991 (TIYFSDIVGF…DTVNTASRME (131 aa)) enclose the Guanylate cyclase domain.

The protein belongs to the adenylyl cyclase class-4/guanylyl cyclase family. Phosphorylated. Phosphorylation of the protein kinase-like domain is required for full activation by CNP. Post-translationally, glycosylated.

It is found in the cell membrane. It catalyses the reaction GTP = 3',5'-cyclic GMP + diphosphate. In terms of biological role, receptor for the C-type natriuretic peptide NPPC/CNP hormone. Has guanylate cyclase activity upon binding of its ligand. May play a role in the regulation of skeletal growth. This Homo sapiens (Human) protein is Atrial natriuretic peptide receptor 2 (NPR2).